The primary structure comprises 516 residues: Alstonine synthase (516 aa).

The helical transmembrane segment at 6 to 26 (NFSLTSPIFLLLSSLFLIILL) threads the bilayer. A heme-binding site is contributed by Cys453.

This sequence belongs to the cytochrome P450 family. The cofactor is heme. Highly expressed in stems. Expressed at low levels in roots.

It localises to the endoplasmic reticulum membrane. The catalysed reaction is tetrahydroalstonine + A + reduced [NADPH--hemoprotein reductase] + O2 = alstonine + AH2 + oxidized [NADPH--hemoprotein reductase] + 2 H2O + H(+). It catalyses the reaction ajmalicine + A + reduced [NADPH--hemoprotein reductase] + O2 = serpentine + AH2 + oxidized [NADPH--hemoprotein reductase] + 2 H2O + H(+). It participates in alkaloid biosynthesis. In terms of biological role, involved in monoterpene indole alkaloids (MIAs) biosynthesis. Converts by aromatization the tetrahydro-beta-carboline alkaloids tetrahydroalstonine and ajmalicine to the corresponding beta-carboline alkaloids alstonine and serpentine, respectively. The sequence is that of Alstonine synthase from Catharanthus roseus (Madagascar periwinkle).